We begin with the raw amino-acid sequence, 315 residues long: Phage tubulin-like protein (315 aa).

GTP contacts are provided by residues G12–T13, G93–G95, and N165.

Belongs to the FtsZ family. PhuZ subfamily. Homomultimer. Polymerizes in a strictly GTP-dependent manner.

The protein localises to the host cytoplasm. The enzyme catalyses GTP + H2O = GDP + phosphate + H(+). Its activity is regulated as follows. The non-hydrolyzable GTP analog GMPCPP stabilizes filaments, which never disassemble. Its function is as follows. A tubulin-like GTPase that forms filaments, which are required for positioning viral DNA and capsids in the middle of the host cell for optimal replication. The motor component of a partition system which pushes phage DNA (encased by protein gp105) to the center of the bacterial host cell. Also required for movement of phage capsids to the vicinity of the viral DNA and rotation of the encased viral DNA at midcell. Forms filaments during the lytic phase, which position phage DNA at the center of the bacterial host cell. Filaments have a three-stranded intertwined achitecture and form a spindle-like cytoskeleton within the infected cell. Has GTPase activity. Filaments grow at the plus end and depolymerize at the minus end, a process called treadmilling, and switch from growing in a polar manner to catastrophic depolymerization, i.e. they display dynamic instability, like tubulin. In infected host cells the filament ends close to the cell pole are relatively stable, while the other end near the phage DNA is highly dynamic. Both capsid movement and DNA rotation probably require treadmilling. This Pseudomonas phage 201phi2-1 (Pseudomonas chlororaphis phage 201phi2-1) protein is Phage tubulin-like protein.